Reading from the N-terminus, the 284-residue chain is Shikimate dehydrogenase (NADP(+)) (284 aa).

Shikimate-binding positions include S20–S22 and S67. K71 functions as the Proton acceptor in the catalytic mechanism. D83 contributes to the NADP(+) binding site. N92 and D107 together coordinate shikimate. NADP(+) contacts are provided by residues G129–A133 and I227. Shikimate is bound at residue Y229. Residue G250 coordinates NADP(+).

Belongs to the shikimate dehydrogenase family. In terms of assembly, homodimer.

The enzyme catalyses shikimate + NADP(+) = 3-dehydroshikimate + NADPH + H(+). It functions in the pathway metabolic intermediate biosynthesis; chorismate biosynthesis; chorismate from D-erythrose 4-phosphate and phosphoenolpyruvate: step 4/7. In terms of biological role, involved in the biosynthesis of the chorismate, which leads to the biosynthesis of aromatic amino acids. Catalyzes the reversible NADPH linked reduction of 3-dehydroshikimate (DHSA) to yield shikimate (SA). The sequence is that of Shikimate dehydrogenase (NADP(+)) from Streptococcus pneumoniae (strain JJA).